The chain runs to 480 residues: Protein nucleotidyltransferase YdiU (480 aa).

Positions 87, 89, 90, 110, 122, 123, 173, and 180 each coordinate ATP. The Proton acceptor role is filled by Asp249. 2 residues coordinate Mg(2+): Asn250 and Asp259. Asp259 contacts ATP.

Belongs to the SELO family. It depends on Mg(2+) as a cofactor. Mn(2+) serves as cofactor.

The enzyme catalyses L-seryl-[protein] + ATP = 3-O-(5'-adenylyl)-L-seryl-[protein] + diphosphate. It catalyses the reaction L-threonyl-[protein] + ATP = 3-O-(5'-adenylyl)-L-threonyl-[protein] + diphosphate. The catalysed reaction is L-tyrosyl-[protein] + ATP = O-(5'-adenylyl)-L-tyrosyl-[protein] + diphosphate. It carries out the reaction L-histidyl-[protein] + UTP = N(tele)-(5'-uridylyl)-L-histidyl-[protein] + diphosphate. The enzyme catalyses L-seryl-[protein] + UTP = O-(5'-uridylyl)-L-seryl-[protein] + diphosphate. It catalyses the reaction L-tyrosyl-[protein] + UTP = O-(5'-uridylyl)-L-tyrosyl-[protein] + diphosphate. Functionally, nucleotidyltransferase involved in the post-translational modification of proteins. It can catalyze the addition of adenosine monophosphate (AMP) or uridine monophosphate (UMP) to a protein, resulting in modifications known as AMPylation and UMPylation. In Anoxybacillus flavithermus (strain DSM 21510 / WK1), this protein is Protein nucleotidyltransferase YdiU.